The sequence spans 436 residues: Gamma-glutamyl phosphate reductase (436 aa).

This sequence belongs to the gamma-glutamyl phosphate reductase family.

It localises to the cytoplasm. The catalysed reaction is L-glutamate 5-semialdehyde + phosphate + NADP(+) = L-glutamyl 5-phosphate + NADPH + H(+). It participates in amino-acid biosynthesis; L-proline biosynthesis; L-glutamate 5-semialdehyde from L-glutamate: step 2/2. Functionally, catalyzes the NADPH-dependent reduction of L-glutamate 5-phosphate into L-glutamate 5-semialdehyde and phosphate. The product spontaneously undergoes cyclization to form 1-pyrroline-5-carboxylate. This chain is Gamma-glutamyl phosphate reductase, found in Prochlorococcus marinus subsp. pastoris (strain CCMP1986 / NIES-2087 / MED4).